A 354-amino-acid chain; its full sequence is Probable L-ascorbate-6-phosphate lactonase UlaG (354 aa).

It belongs to the UlaG family. Requires a divalent metal cation as cofactor.

It localises to the cytoplasm. The catalysed reaction is L-ascorbate 6-phosphate + H2O = 3-dehydro-L-gulonate 6-phosphate. It functions in the pathway cofactor degradation; L-ascorbate degradation; D-xylulose 5-phosphate from L-ascorbate: step 1/4. Probably catalyzes the hydrolysis of L-ascorbate-6-P into 3-keto-L-gulonate-6-P. Is essential for L-ascorbate utilization under anaerobic conditions. In Salmonella gallinarum (strain 287/91 / NCTC 13346), this protein is Probable L-ascorbate-6-phosphate lactonase UlaG.